A 279-amino-acid polypeptide reads, in one-letter code: Release factor glutamine methyltransferase (279 aa).

S-adenosyl-L-methionine-binding residues include aspartate 139 and asparagine 182. 182 to 185 (NPPY) contributes to the substrate binding site.

Belongs to the protein N5-glutamine methyltransferase family. PrmC subfamily.

The enzyme catalyses L-glutaminyl-[peptide chain release factor] + S-adenosyl-L-methionine = N(5)-methyl-L-glutaminyl-[peptide chain release factor] + S-adenosyl-L-homocysteine + H(+). In terms of biological role, methylates the class 1 translation termination release factors RF1/PrfA and RF2/PrfB on the glutamine residue of the universally conserved GGQ motif. This Thermodesulfovibrio yellowstonii (strain ATCC 51303 / DSM 11347 / YP87) protein is Release factor glutamine methyltransferase.